A 137-amino-acid chain; its full sequence is Protein Flattop homolog (137 aa).

It belongs to the Flattop family.

It localises to the cytoplasm. Its subcellular location is the cytoskeleton. The protein localises to the flagellum axoneme. Functionally, microtubule inner protein (MIP) part of the dynein-decorated doublet microtubules (DMTs) in cilia axoneme. Acts as a regulator of cilium basal body docking and positioning in mono- and multiciliated cells. Regulates basal body docking and cilia formation in multiciliated lung cells. Regulates kinocilium positioning and stereocilia bundle morphogenesis in the inner ear. This Chlamydomonas reinhardtii (Chlamydomonas smithii) protein is Protein Flattop homolog.